A 318-amino-acid polypeptide reads, in one-letter code: Ribonuclease Z (318 aa).

Zn(2+)-binding residues include His62, His64, Asp66, His67, His144, Asp215, and His273. The active-site Proton acceptor is the Asp66.

The protein belongs to the RNase Z family. As to quaternary structure, homodimer. Zn(2+) is required as a cofactor.

It catalyses the reaction Endonucleolytic cleavage of RNA, removing extra 3' nucleotides from tRNA precursor, generating 3' termini of tRNAs. A 3'-hydroxy group is left at the tRNA terminus and a 5'-phosphoryl group is left at the trailer molecule.. In terms of biological role, zinc phosphodiesterase, which displays some tRNA 3'-processing endonuclease activity. Probably involved in tRNA maturation, by removing a 3'-trailer from precursor tRNA. The protein is Ribonuclease Z of Prochlorococcus marinus (strain MIT 9313).